A 33-amino-acid polypeptide reads, in one-letter code: Suppressor protein HFN40 (33 aa).

Its function is as follows. Suppresses expansion of husk leaf blades. In Zea mays (Maize), this protein is Suppressor protein HFN40.